The sequence spans 249 residues: Triosephosphate isomerase (249 aa).

2 residues coordinate substrate: Asn12 and Lys14. Position 14 is an N6-acetyllysine (Lys14). Tyr68 carries the post-translational modification 3'-nitrotyrosine. Ser80 is modified (phosphoserine). His96 functions as the Electrophile in the catalytic mechanism. The residue at position 106 (Ser106) is a Phosphoserine. Lys142 is covalently cross-linked (Glycyl lysine isopeptide (Lys-Gly) (interchain with G-Cter in SUMO1)). Lys149 carries the post-translational modification N6-succinyllysine. An N6-acetyllysine; alternate modification is found at Lys156. Lys156 carries the post-translational modification N6-succinyllysine; alternate. Ser159 carries the phosphoserine modification. Residue Glu166 is the Proton acceptor of the active site. Thr173 is modified (phosphothreonine). Lys194 bears the N6-acetyllysine; alternate mark. Lys194 is modified (N6-succinyllysine; alternate). An N6-methyllysine; alternate modification is found at Lys194. The residue at position 198 (Ser198) is a Phosphoserine. 3'-nitrotyrosine is present on Tyr209. Residue Ser212 is modified to Phosphoserine. Thr214 is modified (phosphothreonine). Ser223 bears the Phosphoserine mark. The residue at position 238 (Lys238) is an N6-acetyllysine.

It belongs to the triosephosphate isomerase family. As to quaternary structure, homodimer.

The protein resides in the cytoplasm. It carries out the reaction dihydroxyacetone phosphate = methylglyoxal + phosphate. The enzyme catalyses D-glyceraldehyde 3-phosphate = dihydroxyacetone phosphate. It participates in carbohydrate degradation; glycolysis; D-glyceraldehyde 3-phosphate from glycerone phosphate: step 1/1. Its pathway is carbohydrate biosynthesis; gluconeogenesis. Triosephosphate isomerase is an extremely efficient metabolic enzyme that catalyzes the interconversion between dihydroxyacetone phosphate (DHAP) and D-glyceraldehyde-3-phosphate (G3P) in glycolysis and gluconeogenesis. Its function is as follows. It is also responsible for the non-negligible production of methylglyoxal a reactive cytotoxic side-product that modifies and can alter proteins, DNA and lipids. This is Triosephosphate isomerase (TPI1) from Bos taurus (Bovine).